The sequence spans 229 residues: Heptahelical transmembrane protein ADIPOR2 (229 aa).

Residues 1-4 (MQGA) lie on the Cytoplasmic side of the membrane. A helical transmembrane segment spans residues 5–25 (ASHDAAAAAAAAAVLGGGHGV). Over 26 to 30 (PRWPR) the chain is Extracellular. The helical transmembrane segment at 31 to 51 (MVFLVGAMTCLAISATAHLLA) threads the bilayer. The Cytoplasmic portion of the chain corresponds to 52-66 (CHSRRASVVFWQLDY). Residues 67-87 (AGISAMIVASFVPPVYYAFLC) traverse the membrane as a helical segment. The Extracellular segment spans residues 88–92 (HRPAR). Residues 93 to 113 (VAYLSAISALGALVVGALLSP) form a helical membrane-spanning segment. Topologically, residues 114-124 (PCSSPRFRRLR) are cytoplasmic. The helical transmembrane segment at 125 to 145 (AALFLAMGLSGVVPALHALWL) threads the bilayer. Residues 146-153 (NWGHAACY) lie on the Extracellular side of the membrane. The helical transmembrane segment at 154–174 (LALSLEVAMGLAYAAGAWFYV) threads the bilayer. Residues 175–194 (SRVPEKWRPGVFDVVGHSHQ) are Cytoplasmic-facing. Residues 195-215 (IFHVLVLVGAVTHYVAVDVLL) traverse the membrane as a helical segment. The Extracellular segment spans residues 216–229 (NWRETVAAACSATS).

The protein belongs to the ADIPOR family.

The protein resides in the membrane. Functionally, may play a role in abiotic stress response. In Oryza sativa subsp. japonica (Rice), this protein is Heptahelical transmembrane protein ADIPOR2 (ADIPOR2).